Consider the following 750-residue polypeptide: Polyribonucleotide nucleotidyltransferase (750 aa).

The Mg(2+) site is built by Asp523 and Asp529. In terms of domain architecture, KH spans 589 to 648 (PRVTSISIPVDKIGEVIGPKGKMINSITEETGAEITIEDDGTIYVGAADGPSAEAAIDKI). Residues 660-729 (GERFLGTVVK…SRGKISLVVV (70 aa)) form the S1 motif domain.

It belongs to the polyribonucleotide nucleotidyltransferase family. Mg(2+) is required as a cofactor.

It localises to the cytoplasm. It catalyses the reaction RNA(n+1) + phosphate = RNA(n) + a ribonucleoside 5'-diphosphate. Functionally, involved in mRNA degradation. Catalyzes the phosphorolysis of single-stranded polyribonucleotides processively in the 3'- to 5'-direction. In Saccharopolyspora erythraea (strain ATCC 11635 / DSM 40517 / JCM 4748 / NBRC 13426 / NCIMB 8594 / NRRL 2338), this protein is Polyribonucleotide nucleotidyltransferase.